The chain runs to 228 residues: Sodium channel regulatory subunit beta-4 (228 aa).

An N-terminal signal peptide occupies residues 1–30; the sequence is MPGAGDGGKAPARWLGTGLLGLFLLPVTLS. Positions 31 to 148 constitute an Ig-like C2-type domain; it reads LEVSVGKATD…NNLQHHATIF (118 aa). The Extracellular portion of the chain corresponds to 31–162; it reads LEVSVGKATD…DRLEEVDNTV (132 aa). 3 N-linked (GlcNAc...) asparagine glycosylation sites follow: N45, N71, and N113. The cysteines at positions 53 and 131 are disulfide-linked. The chain crosses the membrane as a helical span at residues 163–183; the sequence is TLIILAVVGGVIGLLILILLI. The Cytoplasmic portion of the chain corresponds to 184 to 228; it reads KKLIIFILKKTREKKKECLVSSSGNDNTENGLPGSKAEEKPPSKV. A disordered region spans residues 200–228; the sequence is ECLVSSSGNDNTENGLPGSKAEEKPPSKV. Residues 203 to 213 show a composition bias toward polar residues; that stretch reads VSSSGNDNTEN. Residues 219-228 show a composition bias toward basic and acidic residues; the sequence is KAEEKPPSKV.

Belongs to the sodium channel auxiliary subunit SCN4B (TC 8.A.17) family. In terms of assembly, a voltage-gated sodium (Nav) channel consists of an ion-conducting pore-forming alpha subunit functional on its own that is regulated by one or more beta subunits. The beta subunit SCN4B is disulfide-linked to the pore-forming alpha subunit. Interacts with SCN1A; regulatory subunit of SCN1A/Nav1.1. Interacts with SCN2A; regulatory subunit of SCN2A/Nav1.2. Post-translationally, contains an interchain disulfide bond with SCN2A. In terms of processing, N-glycosylated. Expressed at a high level in dorsal root ganglia, at a lower level in brain, spinal cord, skeletal muscle and heart. Expressed in the atrium.

The protein resides in the cell membrane. Regulatory subunit of multiple voltage-gated sodium (Nav) channels directly mediating the depolarization of excitable membranes. Navs, also called VGSCs (voltage-gated sodium channels) or VDSCs (voltage-dependent sodium channels), operate by switching between closed and open conformations depending on the voltage difference across the membrane. In the open conformation they allow Na(+) ions to selectively pass through the pore, along their electrochemical gradient. The influx of Na+ ions provokes membrane depolarization, initiating the propagation of electrical signals throughout cells and tissues. The accessory beta subunits participate in localization and functional modulation of the Nav channels. Modulates the activity of SCN1A/Nav1.1. Modulates the activity of SCN2A/Nav1.2. This chain is Sodium channel regulatory subunit beta-4, found in Homo sapiens (Human).